We begin with the raw amino-acid sequence, 445 residues long: Potassium/proton antiporter CemA (445 aa).

4 consecutive transmembrane segments (helical) span residues 44 to 64, 330 to 350, 368 to 388, and 405 to 425; these read MQVS…VNIC, ALTC…ILIL, LIII…GWKL, and FILC…KYWI.

This sequence belongs to the CemA family.

It localises to the plastid. It is found in the chloroplast inner membrane. The catalysed reaction is K(+)(in) + H(+)(out) = K(+)(out) + H(+)(in). Its function is as follows. Contributes to K(+)/H(+) antiport activity by supporting proton efflux to control proton extrusion and homeostasis in chloroplasts in a light-dependent manner to modulate photosynthesis. Prevents excessive induction of non-photochemical quenching (NPQ) under continuous-light conditions. Indirectly promotes efficient inorganic carbon uptake into chloroplasts. This is Potassium/proton antiporter CemA from Pleurastrum terricola (Filamentous green alga).